Consider the following 1761-residue polypeptide: Laminin subunit beta-4 (1761 aa).

A signal peptide spans 1–19; the sequence is MQFQLTLFLHLGWLSYSKA. The region spanning 24–264 is the Laminin N-terminal domain; that stretch reads NRGACHPTTG…ALYEMIVRGS (241 aa). N-linked (GlcNAc...) asparagine glycans are attached at residues Asn169, Asn229, and Asn246. 19 disulfides stabilise this stretch: Cys265-Cys274, Cys267-Cys295, Cys297-Cys306, Cys309-Cys329, Cys332-Cys341, Cys334-Cys359, Cys362-Cys371, Cys374-Cys392, Cys395-Cys408, Cys397-Cys423, Cys425-Cys434, Cys437-Cys452, Cys455-Cys468, Cys457-Cys475, Cys477-Cys486, Cys489-Cys503, Cys506-Cys518, Cys508-Cys525, and Cys527-Cys536. 4 consecutive Laminin EGF-like domains span residues 265–331, 332–394, 395–454, and 455–505; these read CFCN…ACRS, CSCN…ACIP, CECD…GCQP, and CDCN…GCSP. In terms of domain architecture, Laminin EGF-like 5; truncated spans 506 to 552; the sequence is CDCDIGGAYSNVCSPKNGQCECRPHVTGRSCSEPAPGYFFAPLNFYL. A Laminin IV type B domain is found at 545 to 763; that stretch reads FAPLNFYLYE…LIISMSAKLH (219 aa). Disulfide bonds link Cys769-Cys781, Cys771-Cys788, Cys790-Cys799, Cys802-Cys814, Cys817-Cys829, Cys819-Cys836, Cys838-Cys847, Cys850-Cys860, Cys863-Cys872, Cys865-Cys879, Cys882-Cys891, Cys894-Cys908, Cys913-Cys938, Cys940-Cys949, Cys952-Cys967, Cys970-Cys984, Cys972-Cys991, Cys994-Cys1003, Cys1006-Cys1019, Cys1022-Cys1043, Cys1024-Cys1050, Cys1052-Cys1061, Cys1064-Cys1077, Cys1080-Cys1092, Cys1082-Cys1099, Cys1101-Cys1110, Cys1113-Cys1125, Cys1128-Cys1140, Cys1130-Cys1147, Cys1149-Cys1158, and Cys1161-Cys1172. Laminin EGF-like domains lie at 769 to 816, 817 to 862, 863 to 910, 911 to 969, 970 to 1021, 1022 to 1079, 1080 to 1127, and 1128 to 1174; these read CKCH…GCHP, CHCH…SCHP, CPCN…PCRP, CLCP…PCQP, CACN…TCRR, CSCH…GCQS, CDCD…RCIP, and CDCN…TCLQ. N-linked (GlcNAc...) asparagine glycosylation is present at Asn1016. Asn1055 is a glycosylation site (N-linked (GlcNAc...) asparagine). Residues 1175 to 1375 are domain II; sequence CHLCFDQWDH…PDIQILNEKV (201 aa). N-linked (GlcNAc...) asparagine glycosylation is found at Asn1223, Asn1301, Asn1326, Asn1333, and Asn1354. A coiled-coil region spans residues 1243–1301; sequence KVKDYHDSVRRQIMQLNEQLKAVYEFQDLKDTIERAKNEADLLLEDLQEEIDLQSSVLN. A domain alpha region spans residues 1376–1408; that stretch reads CGDPGNVPCVPLPCGGALCTGRKGHRKCRGPGC. The domain I stretch occupies residues 1409 to 1761; sequence HGSLTLSTNA…QEKKYARCYS (353 aa). The stretch at 1416 to 1480 forms a coiled coil; sequence TNALQKAQEA…SDSEEENINL (65 aa). N-linked (GlcNAc...) asparagine glycans are attached at residues Asn1469, Asn1517, Asn1587, Asn1596, Asn1609, and Asn1725. A coiled-coil region spans residues 1525–1759; that stretch reads IQKHMQLCED…VEQEKKYARC (235 aa).

As to quaternary structure, laminin is a complex glycoprotein, consisting of three different polypeptide chains (alpha, beta, gamma), which are bound to each other by disulfide bonds into a cross-shaped molecule comprising one long and three short arms with globules at each end.

The protein resides in the secreted. The protein localises to the extracellular space. Its subcellular location is the extracellular matrix. It is found in the basement membrane. Its function is as follows. Binding to cells via a high affinity receptor, laminin is thought to mediate the attachment, migration and organization of cells into tissues during embryonic development by interacting with other extracellular matrix components. In Homo sapiens (Human), this protein is Laminin subunit beta-4 (LAMB4).